A 102-amino-acid polypeptide reads, in one-letter code: Small ribosomal subunit protein uS10 (102 aa).

It belongs to the universal ribosomal protein uS10 family. As to quaternary structure, part of the 30S ribosomal subunit.

Its function is as follows. Involved in the binding of tRNA to the ribosomes. The chain is Small ribosomal subunit protein uS10 from Methanosarcina mazei (strain ATCC BAA-159 / DSM 3647 / Goe1 / Go1 / JCM 11833 / OCM 88) (Methanosarcina frisia).